A 246-amino-acid polypeptide reads, in one-letter code: O-antigen export system ATP-binding protein RfbB (246 aa).

Residues 22 to 246 (SGIKDLIFHP…IIELYKQAMA (225 aa)) form the ABC transporter domain. Residue 63–70 (GRNGAGKS) coordinates ATP.

It belongs to the ABC transporter superfamily.

The protein resides in the cell inner membrane. Its function is as follows. May form an ATP-driven O-antigen export apparatus, in association with RfbA. The sequence is that of O-antigen export system ATP-binding protein RfbB (rfbB) from Klebsiella pneumoniae.